Reading from the N-terminus, the 562-residue chain is Cytosolic invertase 1 (562 aa).

This sequence belongs to the glycosyl hydrolase 100 family.

It is found in the cytoplasm. Its subcellular location is the cytosol. It catalyses the reaction Hydrolysis of terminal non-reducing beta-D-fructofuranoside residues in beta-D-fructofuranosides.. In terms of biological role, cytosolic invertase that cleaves sucrose into glucose and fructose and is involved in the regulation of primary root elongation, lateral root formation, floral transition and pollen development. The chain is Cytosolic invertase 1 from Oryza sativa subsp. japonica (Rice).